Here is a 340-residue protein sequence, read N- to C-terminus: Phosphate acyltransferase (340 aa).

It belongs to the PlsX family. Homodimer. Probably interacts with PlsY.

It localises to the cytoplasm. The catalysed reaction is a fatty acyl-[ACP] + phosphate = an acyl phosphate + holo-[ACP]. The protein operates within lipid metabolism; phospholipid metabolism. In terms of biological role, catalyzes the reversible formation of acyl-phosphate (acyl-PO(4)) from acyl-[acyl-carrier-protein] (acyl-ACP). This enzyme utilizes acyl-ACP as fatty acyl donor, but not acyl-CoA. This is Phosphate acyltransferase from Clostridioides difficile (strain 630) (Peptoclostridium difficile).